Consider the following 54-residue polypeptide: Large ribosomal subunit protein bL33A (54 aa).

This sequence belongs to the bacterial ribosomal protein bL33 family.

This is Large ribosomal subunit protein bL33A (rpmG1) from Mycobacterium bovis (strain ATCC BAA-935 / AF2122/97).